Consider the following 328-residue polypeptide: Homoarginine-6-hydroxylase 2-ODD-233 (328 aa).

In terms of domain architecture, Fe2OG dioxygenase spans 183-288 (FWVCRLIGYP…VSVAFFYESN (106 aa)). 3 residues coordinate Fe cation: histidine 210, aspartate 212, and histidine 268. Arginine 278 serves as a coordination point for 2-oxoglutarate.

Belongs to the iron/ascorbate-dependent oxidoreductase family. Fe(2+) is required as a cofactor. It depends on L-ascorbate as a cofactor. Expressed in roots and shoots.

Its subcellular location is the cytoplasm. It catalyses the reaction L-homoarginine + 2-oxoglutarate + O2 = 6-hydroxy-L-homoarginine + succinate + CO2. The enzyme catalyses melatonin + 2-oxoglutarate + O2 = 2-hydroxymelatonin + succinate + CO2. 2-oxoglutarate-dependent dioxygenase catalyzing homoarginine 6-hydroxylation thus producing 6-hydroxy-L-homoarginine. Guanidine (Gd) is in turn synthesized by the spontaneous conversion of 6-hydroxy-L-homoarginine to (S)-2-amino-6-oxohexanoate (RHEA:79843); guanidine is a nitrogen-rich compound that can serve as a defense or signaling substance. Involved in melatonin degradation. Catalyzes the hydroxylation of melatonin to produce 2-hydroxymelatonin. The polypeptide is Homoarginine-6-hydroxylase 2-ODD-233 (Oryza sativa subsp. japonica (Rice)).